A 557-amino-acid polypeptide reads, in one-letter code: Formate--tetrahydrofolate ligase (557 aa).

ATP is bound at residue 65 to 72 (TPAGEGKT).

It belongs to the formate--tetrahydrofolate ligase family.

It catalyses the reaction (6S)-5,6,7,8-tetrahydrofolate + formate + ATP = (6R)-10-formyltetrahydrofolate + ADP + phosphate. The protein operates within one-carbon metabolism; tetrahydrofolate interconversion. The polypeptide is Formate--tetrahydrofolate ligase (Methylorubrum extorquens (strain PA1) (Methylobacterium extorquens)).